Reading from the N-terminus, the 249-residue chain is tRNA pseudouridine synthase A (249 aa).

The active-site Nucleophile is Asp-53. Position 111 (Tyr-111) interacts with substrate.

It belongs to the tRNA pseudouridine synthase TruA family. In terms of assembly, homodimer.

It carries out the reaction uridine(38/39/40) in tRNA = pseudouridine(38/39/40) in tRNA. Formation of pseudouridine at positions 38, 39 and 40 in the anticodon stem and loop of transfer RNAs. The protein is tRNA pseudouridine synthase A of Streptococcus pneumoniae (strain P1031).